Here is an 878-residue protein sequence, read N- to C-terminus: DNA mismatch repair protein MutS (878 aa).

629 to 636 (GPNMAGKS) serves as a coordination point for ATP.

Belongs to the DNA mismatch repair MutS family.

Functionally, this protein is involved in the repair of mismatches in DNA. It is possible that it carries out the mismatch recognition step. This protein has a weak ATPase activity. The protein is DNA mismatch repair protein MutS of Roseobacter denitrificans (strain ATCC 33942 / OCh 114) (Erythrobacter sp. (strain OCh 114)).